Consider the following 191-residue polypeptide: Fe/S biogenesis protein NfuA (191 aa).

[4Fe-4S] cluster contacts are provided by cysteine 149 and cysteine 152.

Belongs to the NfuA family. As to quaternary structure, homodimer. Requires [4Fe-4S] cluster as cofactor.

Functionally, involved in iron-sulfur cluster biogenesis. Binds a 4Fe-4S cluster, can transfer this cluster to apoproteins, and thereby intervenes in the maturation of Fe/S proteins. Could also act as a scaffold/chaperone for damaged Fe/S proteins. This is Fe/S biogenesis protein NfuA from Citrobacter koseri (strain ATCC BAA-895 / CDC 4225-83 / SGSC4696).